A 501-amino-acid polypeptide reads, in one-letter code: Cystine/glutamate transporter (501 aa).

Topologically, residues 1–43 (MVRKPVVSTISKGGYLQGNVNGRLPSLGNKEPPGQEKVQLKRK) are cytoplasmic. Ser26 is modified (phosphoserine). The helical transmembrane segment at 44–64 (VTLLRGVSIIIGTIIGAGIFI) threads the bilayer. The Extracellular segment spans residues 65-74 (SPKGVLQNTG). Residues 75 to 95 (SVGMSLTIWTVCGVLSLFGAL) form a helical membrane-spanning segment. Topologically, residues 96–101 (SYAELG) are cytoplasmic. The stretch at 102 to 116 (TTIKKSGGHYTYILE) is an intramembrane region. Residues 117–130 (VFGPLPAFVRVWVE) lie on the Cytoplasmic side of the membrane. The helical transmembrane segment at 131-150 (LLIIRPAATAVISLAFGRYI) threads the bilayer. Arg135 serves as a coordination point for L-glutamate. The Extracellular portion of the chain corresponds to 151–163 (LEPFFIQCEIPEL). Residues 164–179 (AIKLITAVGITVVMVL) traverse the membrane as a helical segment. At 180–193 (NSMSVSWSARIQIF) the chain is on the cytoplasmic side. A helical transmembrane segment spans residues 194 to 210 (LTFCKLTAILIIIVPGV). Residues 211-234 (MQLIKGQTQNFKDAFSGRDSSITR) lie on the Extracellular side of the membrane. Residues 235–255 (LPLAFYYGMYAYAGWFYLNFV) traverse the membrane as a helical segment. Tyr244 is a binding site for L-glutamate. Residues 256–265 (TEEVENPEKT) are Cytoplasmic-facing. Residues 266 to 286 (IPLAICISMAIVTIGYVLTNV) traverse the membrane as a helical segment. The Extracellular portion of the chain corresponds to 287-317 (AYFTTINAEELLLSNAVAVTFSERLLGNFSL). Asn314 carries an N-linked (GlcNAc...) asparagine glycan. A helical transmembrane segment spans residues 318–338 (AVPIFVALSCFGSMNGGVFAV). The Cytoplasmic portion of the chain corresponds to 339-364 (SRLFYVASREGHLPEILSMIHVRKHT). A helical membrane pass occupies residues 365 to 385 (PLPAVIVLHPLTMIMLFSGDL). Residues 386 to 387 (DS) are Extracellular-facing. A helical transmembrane segment spans residues 388–408 (LLNFLSFARWLFIGLAVAGLI). Over 409 to 422 (YLRYKCPDMHRPFK) the chain is Cytoplasmic. Residues 423–443 (VPLFIPALFSFTCLFMVALSL) traverse the membrane as a helical segment. Residues 444 to 449 (YSDPFS) are Extracellular-facing. The chain crosses the membrane as a helical span at residues 450 to 470 (TGIGFVITLTGVPAYYLFIIW). Over 471–501 (DKKPRWFRIMSEKITRTLQIILEVVPEEDKL) the chain is Cytoplasmic.

The protein belongs to the amino acid-polyamine-organocation (APC) superfamily. L-type amino acid transporter (LAT) (TC 2.A.3.8) family. As to quaternary structure, disulfide-linked heterodimer with the amino acid transport protein SLC3A2/4F2hc; this interaction mediates cell membrane localization. Post-translationally, ubiquitinated by TRIM26; leading to proteasomal degradation. As to expression, expressed in term placenta and primary term cytotrophoblast. Expressed mainly in the brain, but also in pancreas.

Its subcellular location is the cell membrane. The protein localises to the cell projection. It is found in the microvillus membrane. The catalysed reaction is L-cystine(out) + L-glutamate(in) = L-cystine(in) + L-glutamate(out). It catalyses the reaction an L-alpha-amino acid(in) + L-kynurenine(out) = an L-alpha-amino acid(out) + L-kynurenine(in). The enzyme catalyses N-acetyl-L-cysteine(out) + L-glutamate(in) = N-acetyl-L-cysteine(in) + L-glutamate(out). Inhibited by erastin and sulfasalazine. Inhibited by (S)-lactate. Inactivated by p-chloromercuribenzoic acid and p-chloromercuribenzenesulfonic acid. Heterodimer with SLC3A2, that functions as an antiporter by mediating the exchange of extracellular anionic L-cystine and intracellular L-glutamate across the cellular plasma membrane. Provides L-cystine for the maintenance of the redox balance between extracellular L-cystine and L-cysteine and for the maintenance of the intracellular levels of glutathione that is essential for cells protection from oxidative stress. The transport is sodium-independent, electroneutral with a stoichiometry of 1:1, and is drove by the high intracellular concentration of L-glutamate and the intracellular reduction of L-cystine. In addition, mediates the import of L-kynurenine leading to anti-ferroptotic signaling propagation required to maintain L-cystine and glutathione homeostasis. Moreover, mediates N-acetyl-L-cysteine uptake into the placenta leading to subsequently down-regulation of pathways associated with oxidative stress, inflammation and apoptosis. In vitro can also transport L-aspartate. May participate in astrocyte and meningeal cell proliferation during development and can provide neuroprotection by promoting glutathione synthesis and delivery from non-neuronal cells such as astrocytes and meningeal cells to immature neurons. Controls the production of pheomelanin pigment directly. In Homo sapiens (Human), this protein is Cystine/glutamate transporter.